The sequence spans 193 residues: NADH-quinone oxidoreductase subunit B (193 aa).

Residues Met1 to Val11 are compositionally biased toward polar residues. The disordered stretch occupies residues Met1–Thr23. Positions 72, 73, 137, and 167 each coordinate [4Fe-4S] cluster.

Belongs to the complex I 20 kDa subunit family. In terms of assembly, NDH-1 is composed of 14 different subunits. Subunits NuoB, C, D, E, F, and G constitute the peripheral sector of the complex. Requires [4Fe-4S] cluster as cofactor.

It localises to the cell inner membrane. It catalyses the reaction a quinone + NADH + 5 H(+)(in) = a quinol + NAD(+) + 4 H(+)(out). NDH-1 shuttles electrons from NADH, via FMN and iron-sulfur (Fe-S) centers, to quinones in the respiratory chain. Couples the redox reaction to proton translocation (for every two electrons transferred, four hydrogen ions are translocated across the cytoplasmic membrane), and thus conserves the redox energy in a proton gradient. This is NADH-quinone oxidoreductase subunit B from Brucella canis (strain ATCC 23365 / NCTC 10854 / RM-666).